The sequence spans 477 residues: Serine/threonine protein phosphatase 2A 55 kDa regulatory subunit B' delta isoform (477 aa).

This sequence belongs to the phosphatase 2A regulatory subunit B56 family. PP2A consists of a common heteromeric enzyme, composed of a catalytic subunit (subunits C), a constant regulatory subunit (subunit A), and a variety of regulatory subunits such as subunits B (the R2/B/PR55/B55, R3/B''/PR72/PR130/PR59 and R5/B'/B56 families). Interacts with SRK2E/OST1. As to expression, expressed ubiquitously.

Its subcellular location is the cytoplasm. The B regulatory subunit may modulate substrate selectivity and catalytic activity, and may also direct the localization of the catalytic enzyme to a particular subcellular compartment. In Arabidopsis thaliana (Mouse-ear cress), this protein is Serine/threonine protein phosphatase 2A 55 kDa regulatory subunit B' delta isoform (B'DELTA).